Here is a 349-residue protein sequence, read N- to C-terminus: tRNA pseudouridine synthase D (349 aa).

The disordered stretch occupies residues 1–22 (MTDAPLVTAELPGSGGSLRRSP). Asp-78 (nucleophile) is an active-site residue. One can recognise a TRUD domain in the interval 150-304 (GLPNLFGPQR…AEGTRRAARL (155 aa)).

This sequence belongs to the pseudouridine synthase TruD family.

The catalysed reaction is uridine(13) in tRNA = pseudouridine(13) in tRNA. Responsible for synthesis of pseudouridine from uracil-13 in transfer RNAs. This is tRNA pseudouridine synthase D from Anaeromyxobacter sp. (strain Fw109-5).